A 575-amino-acid chain; its full sequence is TOX high mobility group box family member 3 (575 aa).

Disordered stretches follow at residues 189 to 258 (LGGA…QKPV) and 516 to 575 (QQLQ…VSIF). Low complexity predominate over residues 195–214 (SHTSPSPPASKSATPSPSSS). Over residues 222–238 (DANRAIGEKRTAPDSGK) the composition is skewed to basic and acidic residues. The segment covering 239 to 249 (KPKTPKKKKKK) has biased composition (basic residues). Residues 254–322 (PQKPVSAYAL…EYLKALAAYR (69 aa)) constitute a DNA-binding region (HMG box). Low complexity predominate over residues 516 to 526 (QQLQHMQHQSQ). Residues 527 to 541 (PSPRQHSPVTSQITS) show a composition bias toward polar residues. The segment covering 548–575 (SPQPASQQHQPQIQSQTQTQVLPQVSIF) has biased composition (low complexity).

In terms of assembly, homodimer. Interacts (via HGM box) with CITED1 (via C-terminus); the interaction increases estrogen-response element (ERE)-dependent transcription and protection against cell death. Interacts with CREB1 (phosphorylated form). Interacts with CREB1; the interaction is not depolarization dependent. Interacts with CREBBP (via C-terminus).

Its subcellular location is the nucleus. Transcriptional coactivator of the p300/CBP-mediated transcription complex. Activates transactivation through cAMP response element (CRE) sites. Protects against cell death by inducing antiapoptotic and repressing pro-apoptotic transcripts. Stimulates transcription from the estrogen-responsive or BCL-2 promoters. Required for depolarization-induced transcription activation of the C-FOS promoter in neurons. Associates with chromatin to the estrogen-responsive C3 promoter region. The chain is TOX high mobility group box family member 3 (Tox3) from Mus musculus (Mouse).